The sequence spans 204 residues: LexA repressor (204 aa).

Positions 31–51 (VREIGQAVGLKSSSTVHTHLV) form a DNA-binding region, H-T-H motif. Active-site for autocatalytic cleavage activity residues include serine 128 and lysine 165.

It belongs to the peptidase S24 family. In terms of assembly, homodimer.

The enzyme catalyses Hydrolysis of Ala-|-Gly bond in repressor LexA.. Represses a number of genes involved in the response to DNA damage (SOS response), including recA and lexA. In the presence of single-stranded DNA, RecA interacts with LexA causing an autocatalytic cleavage which disrupts the DNA-binding part of LexA, leading to derepression of the SOS regulon and eventually DNA repair. The sequence is that of LexA repressor from Syntrophomonas wolfei subsp. wolfei (strain DSM 2245B / Goettingen).